The following is a 172-amino-acid chain: uncharacterized protein (172 aa).

Residues 1 to 101 lie on the Lumenal side of the membrane; the sequence is MEHVSKRSIG…RYDINTRPLV (101 aa). Residues 102-122 form a helical membrane-spanning segment; sequence VVLAISIVFFGCLLVLKDIII. The Cytoplasmic portion of the chain corresponds to 123–145; that stretch reads QSSENILSVSKWKIIGASFMGTP. The helical transmembrane segment at 146–164 threads the bilayer; sequence YTGLLTGLVGPLLSPFSAV. At 165–172 the chain is on the lumenal side; the sequence is SSWLSFIF.

It localises to the endoplasmic reticulum membrane. This is an uncharacterized protein from Saccharomyces cerevisiae (strain ATCC 204508 / S288c) (Baker's yeast).